The following is a 458-amino-acid chain: Mitochondrial-processing peptidase subunit beta (458 aa).

Residues Met1–Val41 constitute a mitochondrion transit peptide. His73 is a binding site for Zn(2+). Glu76 serves as the catalytic Proton acceptor. Residues His77 and Glu153 each coordinate Zn(2+).

It belongs to the peptidase M16 family. Heterodimer of mppa-1 (alpha) and mppb-1 (beta) subunits, forming the mitochondrial processing protease (MPP) in which mppa-1 is involved in substrate recognition and binding and mppb-1 is the catalytic subunit. It depends on Zn(2+) as a cofactor.

The protein resides in the mitochondrion matrix. The catalysed reaction is Release of N-terminal transit peptides from precursor proteins imported into the mitochondrion, typically with Arg in position P2.. Its activity is regulated as follows. Binding to mppa-1 is required for catalytic activity. Inhibited by metal chelator ethylenediaminetetraacetic acid (EDTA). Its function is as follows. Catalytic subunit of the essential mitochondrial processing protease (MPP), which cleaves the mitochondrial sequence off newly imported precursors proteins. Preferentially, cleaves after an arginine at position P2. The sequence is that of Mitochondrial-processing peptidase subunit beta from Caenorhabditis elegans.